The sequence spans 350 residues: Serine-threonine kinase receptor-associated protein (350 aa).

WD repeat units follow at residues 12 to 56, 57 to 96, 98 to 137, 141 to 179, 180 to 212, 221 to 262, and 263 to 302; these read GHTR…GTFL, GHKG…ELMT, AHKH…AEPK, GHTS…EVKS, LNFN…HSAV, EAPA…ESYK, and GHFG…TYGL. A phosphoserine mark is found at Ser312, Ser335, and Ser338. The tract at residues 326–350 is disordered; it reads AEEELEEIASENSDSIYSSTPEVKA. The span at 337 to 350 shows a compositional bias: polar residues; the sequence is NSDSIYSSTPEVKA. A Phosphotyrosine modification is found at Tyr342.

It belongs to the WD repeat STRAP family. Part of the core SMN complex that contains SMN1, GEMIN2/SIP1, DDX20/GEMIN3, GEMIN4, GEMIN5, GEMIN6, GEMIN7, GEMIN8 and STRAP/UNRIP. Part of the SMN-Sm complex that contains SMN1, GEMIN2/SIP1, DDX20/GEMIN3, GEMIN4, GEMIN5, GEMIN6, GEMIN7, GEMIN8, STRAP/UNRIP and the Sm proteins SNRPB, SNRPD1, SNRPD2, SNRPD3, SNRPE, SNRPF and SNRPG. Interacts directly with GEMIN6 and GEMIN7. Associates with the SMN complex in the cytoplasm but not in the nucleus. Also interacts with CSDE1/UNR and MAWBP. Interacts with PDPK1. Interacts with TRIM48.

The protein resides in the cytoplasm. It localises to the nucleus. Functionally, the SMN complex catalyzes the assembly of small nuclear ribonucleoproteins (snRNPs), the building blocks of the spliceosome, and thereby plays an important role in the splicing of cellular pre-mRNAs. Most spliceosomal snRNPs contain a common set of Sm proteins SNRPB, SNRPD1, SNRPD2, SNRPD3, SNRPE, SNRPF and SNRPG that assemble in a heptameric protein ring on the Sm site of the small nuclear RNA to form the core snRNP (Sm core). In the cytosol, the Sm proteins SNRPD1, SNRPD2, SNRPE, SNRPF and SNRPG are trapped in an inactive 6S pICln-Sm complex by the chaperone CLNS1A that controls the assembly of the core snRNP. To assemble core snRNPs, the SMN complex accepts the trapped 5Sm proteins from CLNS1A forming an intermediate. Binding of snRNA inside 5Sm triggers eviction of the SMN complex, thereby allowing binding of SNRPD3 and SNRPB to complete assembly of the core snRNP. STRAP plays a role in the cellular distribution of the SMN complex. Negatively regulates TGF-beta signaling but positively regulates the PDPK1 kinase activity by enhancing its autophosphorylation and by significantly reducing the association of PDPK1 with 14-3-3 protein. This is Serine-threonine kinase receptor-associated protein (Strap) from Mus musculus (Mouse).